The primary structure comprises 497 residues: Vacuolar-processing enzyme beta-isozyme 1 (497 aa).

A signal peptide spans 1–23; the sequence is MAARCWVWGFVVALLAVAAAADG. A glycan (N-linked (GlcNAc...) asparagine) is linked at Asn-153. His-180 is an active-site residue. Cys-222 functions as the Nucleophile in the catalytic mechanism. An intrachain disulfide couples Cys-255 to Cys-269. Asn-340 carries N-linked (GlcNAc...) asparagine glycosylation. Intrachain disulfides connect Cys-432–Cys-462 and Cys-444–Cys-479.

Belongs to the peptidase C13 family. Auto-catalytic activation.

The protein localises to the protein storage vacuole. It carries out the reaction Hydrolysis of proteins and small molecule substrates at -Asn-|-Xaa- bonds.. In terms of biological role, asparagine-specific endopeptidase that may be involved in processing of proteins targeted to vacuoles. Cysteine protease required for post-translational proteolysis of seed storage proteins in the protein storage vacuole (PSV) of developing seeds, by processing of proglutelin precursor to mature glutelin subunits, thus contributing to the formation of protein crystalline structures in PSV. The polypeptide is Vacuolar-processing enzyme beta-isozyme 1 (Oryza sativa subsp. indica (Rice)).